The sequence spans 310 residues: Alpha/beta hydrolase domain-containing protein 17A (310 aa).

The tract at residues 38 to 61 is disordered; the sequence is VPEPEPGPGGAGAAPSGPLRTSAA. Active-site charge relay system residues include Ser190, Asp255, and His284. Ser307 carries the phosphoserine modification.

This sequence belongs to the AB hydrolase superfamily. ABHD17 family. In terms of processing, palmitoylated on cysteine residues located in a cysteine cluster at the N-terminus which promotes membrane localization. Palmitoylation is required for post-synaptic localization and for depalmitoylating activity towards DLG4/PSD95. As to expression, expressed in brain (at protein level). Expressed in hippocampal neurons.

It is found in the cell membrane. The protein localises to the recycling endosome membrane. It localises to the cell projection. The protein resides in the dendritic spine. Its subcellular location is the postsynaptic density membrane. It catalyses the reaction S-hexadecanoyl-L-cysteinyl-[protein] + H2O = L-cysteinyl-[protein] + hexadecanoate + H(+). Its function is as follows. Hydrolyzes fatty acids from S-acylated cysteine residues in proteins. Has depalmitoylating activity towards NRAS. Has depalmitoylating activity towards DLG4/PSD95. May have depalmitoylating activity towards MAP6. The chain is Alpha/beta hydrolase domain-containing protein 17A from Rattus norvegicus (Rat).